Here is a 468-residue protein sequence, read N- to C-terminus: mRNA cleavage and polyadenylation factor CLP1 (468 aa).

The disordered stretch occupies residues 1–22; it reads MLSLPGLNLAPQPAEPLNAPTS. ATP-binding positions include E35, K74, and 138–143; that span reads HSGKTS.

This sequence belongs to the Clp1 family. Clp1 subfamily. As to quaternary structure, component of a pre-mRNA cleavage factor complex. Interacts directly with PCF11.

It is found in the nucleus. Its function is as follows. Required for endonucleolytic cleavage during polyadenylation-dependent pre-mRNA 3'-end formation. This Phaeosphaeria nodorum (strain SN15 / ATCC MYA-4574 / FGSC 10173) (Glume blotch fungus) protein is mRNA cleavage and polyadenylation factor CLP1.